A 486-amino-acid chain; its full sequence is Beta-barrel assembly-enhancing protease (486 aa).

An N-terminal signal peptide occupies residues 1–19 (MIATLLSSLLLTGPISAGA). Zn(2+) is bound at residue His-134. Glu-135 is a catalytic residue. Zn(2+)-binding residues include His-138 and Glu-199. Asp-203 acts as the Proton donor in catalysis.

Belongs to the peptidase M48 family. BepA subfamily. Zn(2+) serves as cofactor.

The protein resides in the periplasm. Functionally, functions both as a chaperone and a metalloprotease. Maintains the integrity of the outer membrane by promoting either the assembly or the elimination of outer membrane proteins, depending on their folding state. The chain is Beta-barrel assembly-enhancing protease from Yersinia pestis.